The chain runs to 228 residues: Protein TIFY 10a (228 aa).

The Tify domain occupies 75 to 110 (REQEKRQLTIFYGGKVLVFDDFPAEKAKDLMQMASK). Positions 164–189 (PQARKASLHRFLEKRKDRLQAKAPYQ) match the Jas motif. The Nuclear localization signal signature appears at 166-173 (ARKASLHR). The segment at 175 to 228 (LEKRKDRLQAKAPYQGSPSDASPVKKELQESQPWLGLGPQVAAPDLSLRQESSQ) is disordered.

This sequence belongs to the TIFY/JAZ family. Interacts with COI1A and COI1B in a coronatine-dependent manner. Coronatine is an analog of jasmonoyl isoleucine (JA-Ile). Post-translationally, ubiquitinated. Targeted for degradation by the SCF(COI1) E3 ubiquitin ligase-proteasome pathway during jasmonate signaling.

It localises to the nucleus. Its function is as follows. Repressor of jasmonate responses. This chain is Protein TIFY 10a, found in Oryza sativa subsp. japonica (Rice).